Reading from the N-terminus, the 199-residue chain is Glycerol-3-phosphate acyltransferase (199 aa).

Helical transmembrane passes span 3 to 23 (YILI…YLLP), 50 to 70 (VIGF…VLVF), 77 to 97 (IHYT…PVFL), 110 to 130 (GVFF…WISI), and 136 to 156 (YVSL…FFFN).

It belongs to the PlsY family. As to quaternary structure, probably interacts with PlsX.

Its subcellular location is the cell inner membrane. The enzyme catalyses an acyl phosphate + sn-glycerol 3-phosphate = a 1-acyl-sn-glycero-3-phosphate + phosphate. It functions in the pathway lipid metabolism; phospholipid metabolism. Its function is as follows. Catalyzes the transfer of an acyl group from acyl-phosphate (acyl-PO(4)) to glycerol-3-phosphate (G3P) to form lysophosphatidic acid (LPA). This enzyme utilizes acyl-phosphate as fatty acyl donor, but not acyl-CoA or acyl-ACP. This chain is Glycerol-3-phosphate acyltransferase, found in Pseudothermotoga lettingae (strain ATCC BAA-301 / DSM 14385 / NBRC 107922 / TMO) (Thermotoga lettingae).